The primary structure comprises 426 residues: Enolase 2 (426 aa).

Glutamine 163 lines the (2R)-2-phosphoglycerate pocket. Glutamate 205 (proton donor) is an active-site residue. Positions 242, 285, and 312 each coordinate Mg(2+). (2R)-2-phosphoglycerate contacts are provided by lysine 337, arginine 366, serine 367, and lysine 388. Catalysis depends on lysine 337, which acts as the Proton acceptor.

Belongs to the enolase family. Mg(2+) is required as a cofactor.

It is found in the cytoplasm. Its subcellular location is the secreted. The protein localises to the cell surface. The catalysed reaction is (2R)-2-phosphoglycerate = phosphoenolpyruvate + H2O. Its pathway is carbohydrate degradation; glycolysis; pyruvate from D-glyceraldehyde 3-phosphate: step 4/5. Catalyzes the reversible conversion of 2-phosphoglycerate (2-PG) into phosphoenolpyruvate (PEP). It is essential for the degradation of carbohydrates via glycolysis. The protein is Enolase 2 of Methanospirillum hungatei JF-1 (strain ATCC 27890 / DSM 864 / NBRC 100397 / JF-1).